The primary structure comprises 263 residues: 3-deoxy-manno-octulosonate cytidylyltransferase (263 aa).

The protein belongs to the KdsB family.

The protein localises to the cytoplasm. It catalyses the reaction 3-deoxy-alpha-D-manno-oct-2-ulosonate + CTP = CMP-3-deoxy-beta-D-manno-octulosonate + diphosphate. It functions in the pathway nucleotide-sugar biosynthesis; CMP-3-deoxy-D-manno-octulosonate biosynthesis; CMP-3-deoxy-D-manno-octulosonate from 3-deoxy-D-manno-octulosonate and CTP: step 1/1. Its pathway is bacterial outer membrane biogenesis; lipopolysaccharide biosynthesis. Functionally, activates KDO (a required 8-carbon sugar) for incorporation into bacterial lipopolysaccharide in Gram-negative bacteria. The polypeptide is 3-deoxy-manno-octulosonate cytidylyltransferase (Burkholderia cenocepacia (strain ATCC BAA-245 / DSM 16553 / LMG 16656 / NCTC 13227 / J2315 / CF5610) (Burkholderia cepacia (strain J2315))).